The primary structure comprises 412 residues: Zinc finger protein 821 (412 aa).

Residues 26–83 form a disordered region; the sequence is RQAMMKTDFPGDLGSQRQAIQQLRDQDSSSSDSEGDEEETTQDEVSSHTSEEDGGVVK. Residues 58–67 are compositionally biased toward acidic residues; that stretch reads SEGDEEETTQ. 2 consecutive C2H2-type zinc fingers follow at residues 116-140 and 150-172; these read ELCQCPLCQLDCGSREQLIAHVYQH and YMCPVCGRALSSPGSLGRHLLIH. Residues 257–366 are a coiled coil; it reads KWALRRQNEP…EKMDMMLRAQ (110 aa). The tract at residues 278–319 is disordered; the sequence is RTAKKSRRDNETPEEREVRRMRDREAKRLQRMQETDEQRARR.

This sequence belongs to the krueppel C2H2-type zinc-finger protein family.

Its subcellular location is the nucleus. May be involved in transcriptional regulation. This Homo sapiens (Human) protein is Zinc finger protein 821 (ZNF821).